The chain runs to 941 residues: RNA-binding protein 4F (941 aa).

Over residues 1–13 (MDADKQLERQLEK) the composition is skewed to basic and acidic residues. The interval 1–149 (MDADKQLERQ…DSDNAGGGNQ (149 aa)) is disordered. Residues 14–32 (ELDEMPAEDLDDDAYDEYD) show a composition bias toward acidic residues. Positions 42 to 52 (GSPQQGHSESP) are enriched in polar residues. Position 43 is a phosphoserine (Ser-43). Positions 55–65 (EEEHKSEELRQ) are enriched in basic and acidic residues. Acidic residues predominate over residues 87–98 (SSDDEPSVEETE). Residues 111–134 (DSSSSSDDVGVIEGSELESNSEVS) are compositionally biased toward low complexity. Residue Ser-153 is modified to Phosphoserine. The disordered stretch occupies residues 629-713 (RSRIKPNSQS…GPANAEAKES (85 aa)). Over residues 671 to 680 (EQQQQQQQQQ) the composition is skewed to low complexity. Ser-713 carries the post-translational modification Phosphoserine. Tyr-717 carries the phosphotyrosine modification. Ser-718 carries the post-translational modification Phosphoserine. The RRM domain maps to 724–801 (NKIFVRNLHP…MNISVAISNP (78 aa)). 3 stretches are compositionally biased toward basic and acidic residues: residues 862 to 902 (EANG…KGDD), 913 to 922 (QKGDEKKEEE), and 930 to 941 (SNDDFRKLFLKD). A disordered region spans residues 862–941 (EANGEEQKGD…DDFRKLFLKD (80 aa)).

It localises to the cytoplasm. Its function is as follows. May be involved in gene regulation during development. Binds RNA. This Drosophila melanogaster (Fruit fly) protein is RNA-binding protein 4F.